Consider the following 1530-residue polypeptide: B-cell CLL/lymphoma 9-like protein (1530 aa).

8 disordered regions span residues Met-1–Pro-101, Gln-155–His-187, His-246–Leu-353, Ser-398–Gly-439, Gln-473–Pro-503, Gln-821–Leu-1076, Lys-1250–Ile-1279, and Ser-1310–Ser-1331. Residues Ser-8 to Ala-18 are compositionally biased toward polar residues. Over residues Gln-19–Ala-34 the composition is skewed to low complexity. Positions Glu-81 to Glu-93 are enriched in basic and acidic residues. Low complexity predominate over residues Gly-156 to His-165. A compositionally biased stretch (gly residues) spans Gly-170–Pro-180. Composition is skewed to polar residues over residues Ile-247–Thr-264 and Gly-278–His-287. 2 stretches are compositionally biased toward low complexity: residues Gly-409–Asp-426 and Ser-485–Pro-503. Polar residues-rich tracts occupy residues Leu-875–Arg-891, Gln-920–Pro-930, and Ser-944–Pro-953. 3 stretches are compositionally biased toward low complexity: residues Ala-960–Ser-971, Gly-979–Leu-994, and Ser-1031–Ser-1060. Residues Pro-1258–Pro-1268 show a composition bias toward pro residues.

It belongs to the BCL9 family.

It is found in the nucleus. Its function is as follows. Transcriptional regulator that may act as an activator. Plays a role for mesoderm patterning in early embryogenesis. This Danio rerio (Zebrafish) protein is B-cell CLL/lymphoma 9-like protein (bcl9l).